Reading from the N-terminus, the 208-residue chain is ATP-dependent Clp protease proteolytic subunit (208 aa).

The active-site Nucleophile is serine 105. Histidine 130 is a catalytic residue.

It belongs to the peptidase S14 family. In terms of assembly, fourteen ClpP subunits assemble into 2 heptameric rings which stack back to back to give a disk-like structure with a central cavity, resembling the structure of eukaryotic proteasomes.

The protein localises to the cytoplasm. It catalyses the reaction Hydrolysis of proteins to small peptides in the presence of ATP and magnesium. alpha-casein is the usual test substrate. In the absence of ATP, only oligopeptides shorter than five residues are hydrolyzed (such as succinyl-Leu-Tyr-|-NHMec, and Leu-Tyr-Leu-|-Tyr-Trp, in which cleavage of the -Tyr-|-Leu- and -Tyr-|-Trp bonds also occurs).. Cleaves peptides in various proteins in a process that requires ATP hydrolysis. Has a chymotrypsin-like activity. Plays a major role in the degradation of misfolded proteins. The polypeptide is ATP-dependent Clp protease proteolytic subunit (Xylella fastidiosa (strain M23)).